We begin with the raw amino-acid sequence, 265 residues long: Mlc titration factor A (265 aa).

Zn(2+) contacts are provided by His111, His148, His152, and Glu211.

This sequence belongs to the MtfA family. As to quaternary structure, interacts with Mlc. Requires Zn(2+) as cofactor.

It is found in the cytoplasm. Functionally, involved in the modulation of the activity of the glucose-phosphotransferase system (glucose-PTS). Interacts with the transcriptional repressor Mlc, preventing its interaction with DNA and leading to the modulation of expression of genes regulated by Mlc, including ptsG, which encodes the PTS system glucose-specific EIICB component. In terms of biological role, shows zinc-dependent metallopeptidase activity. This Enterobacter sp. (strain 638) protein is Mlc titration factor A.